The chain runs to 457 residues: Phosphomethylpyrimidine synthase (457 aa).

Substrate is bound by residues Asn-81, Met-110, Tyr-139, His-175, 195-197, 236-239, and Glu-275; these read SRG and DALR. His-279 contacts Zn(2+). Position 302 (Tyr-302) interacts with substrate. His-343 is a Zn(2+) binding site. [4Fe-4S] cluster contacts are provided by Cys-423, Cys-426, and Cys-431.

Belongs to the ThiC family. The cofactor is [4Fe-4S] cluster.

It carries out the reaction 5-amino-1-(5-phospho-beta-D-ribosyl)imidazole + S-adenosyl-L-methionine = 4-amino-2-methyl-5-(phosphooxymethyl)pyrimidine + CO + 5'-deoxyadenosine + formate + L-methionine + 3 H(+). The protein operates within cofactor biosynthesis; thiamine diphosphate biosynthesis. In terms of biological role, catalyzes the synthesis of the hydroxymethylpyrimidine phosphate (HMP-P) moiety of thiamine from aminoimidazole ribotide (AIR) in a radical S-adenosyl-L-methionine (SAM)-dependent reaction. This chain is Phosphomethylpyrimidine synthase, found in Aquifex aeolicus (strain VF5).